The following is a 518-amino-acid chain: Efflux pump terJ (518 aa).

A helical transmembrane segment spans residues 43 to 63 (IAFIVVVCMAQLVSQAGLGQV). N-linked (GlcNAc...) asparagine glycosylation is present at asparagine 79. 12 helical membrane-spanning segments follow: residues 82 to 102 (QLSW…LGAG), 112 to 132 (LLFT…AFAE), 135 to 155 (GPVF…FLLP), 177 to 197 (AFGS…ALAA), 204 to 224 (WGFW…IFWV), 244 to 264 (IAGC…LNMA), 272 to 292 (PYIY…GYIE), 311 to 331 (FVLA…FYGW), 339 to 359 (GISP…GFVA), 364 to 384 (GLIL…AAFC), 400 to 420 (WAQL…SFPA), and 439 to 459 (SLVA…GAIV). Asparagine 466 carries N-linked (GlcNAc...) asparagine glycosylation. The chain crosses the membrane as a helical span at residues 477-497 (AWYLGVGLAASGIILTMFFAL).

This sequence belongs to the major facilitator superfamily.

The protein localises to the cell membrane. In terms of biological role, efflux pump that might be required for efficient secretion of terrein or other secondary metabolies produced by the terrein genne cluster. The sequence is that of Efflux pump terJ from Aspergillus terreus (strain NIH 2624 / FGSC A1156).